A 386-amino-acid chain; its full sequence is NifS-like protein (386 aa).

Residues serine 58–glutamate 59 and serine 184–asparagine 186 each bind pyridoxal 5'-phosphate.

The protein belongs to the class-V pyridoxal-phosphate-dependent aminotransferase family. NifS/IscS subfamily. Pyridoxal 5'-phosphate is required as a cofactor.

It is found in the virion. The protein is NifS-like protein of Ornithodoros (relapsing fever ticks).